Here is a 278-residue protein sequence, read N- to C-terminus: ATPase SWSAP1 (278 aa).

Positions 237–278 (SPEKKDSSAGSQSLTLGCDNLPGPGSPLDGILTSETGADSKT) are disordered. Positions 269 to 278 (TSETGADSKT) are enriched in polar residues.

As to quaternary structure, interacts with ZSWIM7; they form a functional complex involved in homologous recombination repair and stabilize each other. Interacts with RAD51, RAD51B, RAD51C, RAD51D and XRCC3; involved in homologous recombination repair.

The protein localises to the nucleus. ATPase which is preferentially stimulated by single-stranded DNA and is involved in homologous recombination repair (HRR). Has a DNA-binding activity which is independent of its ATPase activity. The protein is ATPase SWSAP1 (Swsap1) of Mus musculus (Mouse).